The sequence spans 559 residues: Protein pp71 (559 aa).

S-nitrosocysteine; by host is present on Cys218. Thr223 carries the post-translational modification Phosphothreonine. Disordered stretches follow at residues 404–440 (EFLPQSPGLPPTEEEEEEEEEDDEDDLSSTPTPTPLS) and 530–559 (SSTLRSVPAPRPSPISTASTSSTPRSRPRI). Residues 415–430 (TEEEEEEEEEDDEDDL) show a composition bias toward acidic residues. Composition is skewed to low complexity over residues 431–440 (SSTPTPTPLS) and 543–559 (PISTASTSSTPRSRPRI).

This sequence belongs to the herpesviridae pp71 family. Interacts with the host protein DAXX; this interaction takes place at ND10 and induces the reversal of DAXX-mediated repression of viral transcription. Interacts with UL35. Interacts with host TMEM173/STING1; this interaction inhibits the cGAS/STING pathway. Interacts with host RB1; this interaction mediates RB1 proteasomal degradation. S-nitrosylation limits ability to undermine the cGAS/STING antiviral pathway.

It localises to the virion tegument. The protein localises to the host nucleus. It is found in the host endoplasmic reticulum. Functionally, stimulates viral immediate-early (IE) transcription. Plays a role in the inhibition of the host innate repsonse by targeting STING1 and thus the cGAS-STING pathway. Also counteracts host DAXX-mediated repression of viral transcription. Displaces a DAXX-binding protein, ATRX, from nuclear domain 10 sites (ND10) shortly after infection. Increases the basal level of SUMOylated DAXX in infected cells. Stimulates quiescent cells to re-enter the cell cycle, proceed through G1 and enter the S phase. Interacts with hypophosphorylated forms of RB1 and induces their degradation by the proteasome without involving ubiquitin conjugation. This is Protein pp71 (UL82) from Homo sapiens (Human).